Consider the following 836-residue polypeptide: MSSESHGKAVAKAIRLPTENYTVEKEIGKGSFAIVYKGVSLRDGRNIAIKAVSRSKLKNKKLLENLEVEIAILKKIKHPHIVGLIDCERTSTDFYLIMEYCALGDLTFFIKKRRSLVMKHPLIKTVFDLYPPPSAEHNGLNRVLVVNYLQQLSSALKFLRSKNLVHRDIKPQNLLLCTPLQDYSDPKTFHEMGFIGIYNLPVLKIADFGFARFLPNTSLAETLCGSPLYMAPEILNYQKYNAKADLWSVGTVLYEMCCGRPPFKASNHLELFQKIKKANDEVTVPSNCYIEPKIFKLIKGLLTFDPEARMGFNEFFNNEVVTEDLSRYEASYEPDLESKSKDVAESNMFVSEYLVRPAAQEKANGGLRTDEGSAMPGAEHTYNKEREHYRERQDLQGQQQQQQQHPDSPPRGSTQGYQSSAGQTRMKSSYNDLILEKEYVVVEKKTVEVNSLADDFANNGPTTNNQGAQIIKPLRYRTSSSSDGHGGRRASLVERRLSISSLSPSNALSKALGLASVRLFGYQQPNTQTTSTSTHPTLLNPQIFHELTENAVLRADHHLNLFNEQISDSNITPFVESLSAKAFVMYSFAEMKFSQILPSPPSSTDYYSQSDKRLSNGSCAIDDDDDLDSGNPSSNQTLTPGANKVSAANVDNLIPAPELKKLCMESLLLYLKSLTILASSMKLTSKWWYENESKNCTLKLNILVQWIRDRFNECLDKAEFLRLKLHTLNQSEDPQVLDDEPTIFVEKLIYDRALDISRNAARLEMEGGNYNTCELAYATSLWMLEILLDEHLSSNEVYDDGYSSNITSLDESDKEMIRKYVSSIANRLKALKSKMS.

The Protein kinase domain occupies 21–321 (YTVEKEIGKG…FNEFFNNEVV (301 aa)). ATP-binding positions include 27-35 (IGKGSFAIV) and K50. Residue D168 is the Proton acceptor of the active site. 3 disordered regions span residues 387 to 425 (EHYRERQDLQGQQQQQQQHPDSPPRGSTQGYQSSAGQTR), 458 to 489 (NNGPTTNNQGAQIIKPLRYRTSSSSDGHGGRR), and 619 to 642 (CAIDDDDDLDSGNPSSNQTLTPGA). Residues 395–404 (LQGQQQQQQQ) show a composition bias toward low complexity. 3 stretches are compositionally biased toward polar residues: residues 411–425 (RGSTQGYQSSAGQTR), 459–468 (NGPTTNNQGA), and 630–640 (GNPSSNQTLTP). Residues 571–836 (ITPFVESLSA…RLKALKSKMS (266 aa)) form an interaction with ATG13 region.

The protein belongs to the protein kinase superfamily. Ser/Thr protein kinase family. APG1/unc-51/ULK1 subfamily. As to quaternary structure, homodimer. Dimerization requires the presence of ATG13. Forms a ternary complex with ATG13 and ATG17.

It is found in the cytoplasm. Its subcellular location is the preautophagosomal structure membrane. It carries out the reaction L-seryl-[protein] + ATP = O-phospho-L-seryl-[protein] + ADP + H(+). The catalysed reaction is L-threonyl-[protein] + ATP = O-phospho-L-threonyl-[protein] + ADP + H(+). Serine/threonine protein kinase involved in the cytoplasm to vacuole transport (Cvt) and found to be essential in autophagy, where it is required for the formation of autophagosomes. Involved in the clearance of protein aggregates which cannot be efficiently cleared by the proteasome. Required for selective autophagic degradation of the nucleus (nucleophagy) as well as for mitophagy which contributes to regulate mitochondrial quantity and quality by eliminating the mitochondria to a basal level to fulfill cellular energy requirements and preventing excess ROS production. Also involved in endoplasmic reticulum-specific autophagic process, in selective removal of ER-associated degradation (ERAD) substrates. Plays a key role in ATG9 and ATG23 cycling through the pre-autophagosomal structure and is necessary to promote ATG18 binding to ATG9 through phosphorylation of ATG9. Catalyzes phosphorylation of ATG4, decreasing the interaction between ATG4 and ATG8 and impairing deconjugation of PE-conjugated forms of ATG8. The protein is Serine/threonine-protein kinase ATG1 of Kluyveromyces marxianus (strain DMKU3-1042 / BCC 29191 / NBRC 104275) (Yeast).